The primary structure comprises 119 residues: Large ribosomal subunit protein bL20 (119 aa).

This sequence belongs to the bacterial ribosomal protein bL20 family.

Its function is as follows. Binds directly to 23S ribosomal RNA and is necessary for the in vitro assembly process of the 50S ribosomal subunit. It is not involved in the protein synthesizing functions of that subunit. The chain is Large ribosomal subunit protein bL20 from Coxiella burnetii (strain CbuK_Q154) (Coxiella burnetii (strain Q154)).